Consider the following 80-residue polypeptide: U19-lycotoxin-Ls1a (80 aa).

An N-terminal signal peptide occupies residues 1 to 22 (MSPKVQALIFIVGLITLLAAHA). The propeptide occupies 23–34 (QEELSDNTESER). 4 cysteine pairs are disulfide-bonded: Cys-36-Cys-50, Cys-43-Cys-55, Cys-49-Cys-66, and Cys-57-Cys-64.

It belongs to the neurotoxin 02 (plectoxin) family. 05 (U19-lycotoxin) subfamily. As to expression, expressed by the venom gland.

It localises to the secreted. The polypeptide is U19-lycotoxin-Ls1a (Lycosa singoriensis (Wolf spider)).